A 117-amino-acid chain; its full sequence is Large ribosomal subunit protein eL34 (117 aa).

Residue S12 is modified to Phosphoserine. K36 and K43 each carry N6-acetyllysine. A Glycyl lysine isopeptide (Lys-Gly) (interchain with G-Cter in SUMO2) cross-link involves residue K108.

Belongs to the eukaryotic ribosomal protein eL34 family. In terms of assembly, component of the large ribosomal subunit.

The protein resides in the cytoplasm. It is found in the cytosol. The protein localises to the endoplasmic reticulum. In terms of biological role, component of the large ribosomal subunit. The ribosome is a large ribonucleoprotein complex responsible for the synthesis of proteins in the cell. The chain is Large ribosomal subunit protein eL34 (RPL34) from Sus scrofa (Pig).